The chain runs to 394 residues: Probable pectate lyase 16 (394 aa).

The signal sequence occupies residues 1–22 (MTLFTVSCLLVVLFLCHSLVHA). Positions 192, 216, and 220 each coordinate Ca(2+). Residue Arg-272 is part of the active site.

Belongs to the polysaccharide lyase 1 family. Requires Ca(2+) as cofactor.

The catalysed reaction is Eliminative cleavage of (1-&gt;4)-alpha-D-galacturonan to give oligosaccharides with 4-deoxy-alpha-D-galact-4-enuronosyl groups at their non-reducing ends.. It functions in the pathway glycan metabolism; pectin degradation; 2-dehydro-3-deoxy-D-gluconate from pectin: step 2/5. This Arabidopsis thaliana (Mouse-ear cress) protein is Probable pectate lyase 16.